The following is a 145-amino-acid chain: Synaptojanin-2-binding protein (145 aa).

Residues 1–117 lie on the Cytoplasmic side of the membrane; sequence MNGRVDYLVT…VHRGEGEPSG (117 aa). A PDZ domain is found at 13–100; the sequence is EINLTRGPSG…AVSLRVQHRL (88 aa). The chain crosses the membrane as a helical; Anchor for type IV membrane protein span at residues 118 to 138; that stretch reads VPVAMVLLPVFALTMVAVWAF. Residues 139-145 lie on the Mitochondrial intermembrane side of the membrane; the sequence is VRYRKQL.

In terms of assembly, binds (via the PDZ domain) to isoform 2A of SYNJ2 (via the unique motif in the C-terminus). Interacts (via C-terminus) with RALBP1. Interacts (via PDZ domain) with ACVR2A (via C-terminus) and ACVR2B (via C-terminus). Forms a ternary complex with ACVR2A and RALBP1. Interacts with MAPK12. Interacts with DLL1; enhances DLL1 protein stability, and promotes notch signaling in endothelial cells. As to expression, isoform 1 and isoform 2 are widely expressed, notably in brain, heart, lung, liver, kidney, skeletal muscle, ovary and testis. Isoform 3 is detected only in heart, spleen and testis.

The protein resides in the mitochondrion outer membrane. The protein localises to the cytoplasm. It is found in the perinuclear region. Isoform 1 regulates endocytosis of activin type 2 receptor kinases through the Ral/RALBP1-dependent pathway and may be involved in suppression of activin-induced signal transduction. Isoform 2 and isoform 3 show a stimulatory affect on activin-induced signal transduction and enhance activin type 2 expression at the cell surface. In Mus musculus (Mouse), this protein is Synaptojanin-2-binding protein.